The following is a 289-amino-acid chain: N-acetylmuramoyl-L-alanine amidase AmiA (289 aa).

Residues 1–34 constitute a signal peptide (tat-type signal); it reads MSTFKLLKTLTSRRQVLKTGLAALTLSGMSHAVA. Residues 36–61 are disordered; the sequence is EETLKTSNGHSKPKTKKTGSKRLVML. Over residues 46-55 the composition is skewed to basic residues; it reads SKPKTKKTGS. The 215-residue stretch at 59–273 folds into the MurNAc-LAA domain; the sequence is VMLDPGHGGI…IATAIANGII (215 aa).

The protein belongs to the N-acetylmuramoyl-L-alanine amidase 3 family. Post-translationally, predicted to be exported by the Tat system. The position of the signal peptide cleavage has not been experimentally proven.

Its subcellular location is the periplasm. The catalysed reaction is Hydrolyzes the link between N-acetylmuramoyl residues and L-amino acid residues in certain cell-wall glycopeptides.. Cell-wall hydrolase involved in septum cleavage during cell division. In Salmonella typhimurium (strain LT2 / SGSC1412 / ATCC 700720), this protein is N-acetylmuramoyl-L-alanine amidase AmiA (amiA).